A 134-amino-acid chain; its full sequence is Small ribosomal subunit protein uS8c (134 aa).

It belongs to the universal ribosomal protein uS8 family. In terms of assembly, part of the 30S ribosomal subunit.

Its subcellular location is the plastid. It is found in the chloroplast. In terms of biological role, one of the primary rRNA binding proteins, it binds directly to 16S rRNA central domain where it helps coordinate assembly of the platform of the 30S subunit. This is Small ribosomal subunit protein uS8c (rps8) from Lepidium virginicum (Virginia pepperweed).